Consider the following 257-residue polypeptide: Phosphate import ATP-binding protein PstB (257 aa).

Residues 11–252 (IQVRDLNFYY…PAKKQTEDYI (242 aa)) form the ABC transporter domain. 43 to 50 (GPSGCGKS) provides a ligand contact to ATP.

This sequence belongs to the ABC transporter superfamily. Phosphate importer (TC 3.A.1.7) family. As to quaternary structure, the complex is composed of two ATP-binding proteins (PstB), two transmembrane proteins (PstC and PstA) and a solute-binding protein (PstS).

It localises to the cell inner membrane. It catalyses the reaction phosphate(out) + ATP + H2O = ADP + 2 phosphate(in) + H(+). In terms of biological role, part of the ABC transporter complex PstSACB involved in phosphate import. Responsible for energy coupling to the transport system. In Salmonella paratyphi A (strain ATCC 9150 / SARB42), this protein is Phosphate import ATP-binding protein PstB.